A 217-amino-acid polypeptide reads, in one-letter code: Insulin-like growth factor 2.L (217 aa).

The first 56 residues, 1–56, serve as a signal peptide directing secretion; the sequence is MEQLSCKHRSSSMEAEAQLCRQTESRSTQLPRMSVMRHLFLLSITFLVYTLDSAKA. The b stretch occupies residues 57 to 83; that stretch reads YRPTETLCGGELVDTLQFVCGDRGFYF. Intrachain disulfides connect C64–C103, C76–C116, and C102–C107. The tract at residues 84 to 96 is c; it reads STNNGRSNRRSNR. The segment at 97–117 is a; that stretch reads GIVEECCFRSCDLELLETYCA. The d stretch occupies residues 118–123; sequence KPSKNE. A propeptide spans 124-217 (e peptide); sequence RDVSTAPATA…LQQTSEPSHN (94 aa).

Belongs to the insulin family.

The protein resides in the secreted. Its function is as follows. The insulin-like growth factors, isolated from plasma, are structurally and functionally related to insulin but have a much higher growth-promoting activity. Promotes anterior neural development. Acts as a ligand for integrin which is required for IGF2 signaling. The protein is Insulin-like growth factor 2.L of Xenopus laevis (African clawed frog).